Here is a 92-residue protein sequence, read N- to C-terminus: Acylphosphatase (92 aa).

Residues C5 and C49 are joined by a disulfide bond. In terms of domain architecture, Acylphosphatase-like spans 5–92 (CIIAWVYGRV…SGELTDFRIR (88 aa)). Active-site residues include R20 and N38.

It belongs to the acylphosphatase family.

It catalyses the reaction an acyl phosphate + H2O = a carboxylate + phosphate + H(+). In Escherichia coli O6:H1 (strain CFT073 / ATCC 700928 / UPEC), this protein is Acylphosphatase.